The sequence spans 617 residues: Dihydroxy-acid dehydratase (617 aa).

Position 81 (D81) interacts with Mg(2+). Position 122 (C122) interacts with [2Fe-2S] cluster. Mg(2+) is bound by residues D123 and K124. N6-carboxylysine is present on K124. Position 195 (C195) interacts with [2Fe-2S] cluster. Residue E492 coordinates Mg(2+). S518 (proton acceptor) is an active-site residue.

This sequence belongs to the IlvD/Edd family. In terms of assembly, homodimer. [2Fe-2S] cluster is required as a cofactor. Requires Mg(2+) as cofactor.

It catalyses the reaction (2R)-2,3-dihydroxy-3-methylbutanoate = 3-methyl-2-oxobutanoate + H2O. The catalysed reaction is (2R,3R)-2,3-dihydroxy-3-methylpentanoate = (S)-3-methyl-2-oxopentanoate + H2O. It participates in amino-acid biosynthesis; L-isoleucine biosynthesis; L-isoleucine from 2-oxobutanoate: step 3/4. It functions in the pathway amino-acid biosynthesis; L-valine biosynthesis; L-valine from pyruvate: step 3/4. Functionally, functions in the biosynthesis of branched-chain amino acids. Catalyzes the dehydration of (2R,3R)-2,3-dihydroxy-3-methylpentanoate (2,3-dihydroxy-3-methylvalerate) into 2-oxo-3-methylpentanoate (2-oxo-3-methylvalerate) and of (2R)-2,3-dihydroxy-3-methylbutanoate (2,3-dihydroxyisovalerate) into 2-oxo-3-methylbutanoate (2-oxoisovalerate), the penultimate precursor to L-isoleucine and L-valine, respectively. This chain is Dihydroxy-acid dehydratase, found in Buchnera aphidicola subsp. Cinara cedri (strain Cc).